Reading from the N-terminus, the 511-residue chain is Glutamyl-tRNA(Gln) amidotransferase subunit A, mitochondrial (511 aa).

Catalysis depends on charge relay system residues Lys72 and Ser149. Residue Ser173 is the Acyl-ester intermediate of the active site.

It belongs to the amidase family. GatA subfamily. In terms of assembly, subunit of the heterotrimeric GatCAB amidotransferase (AdT) complex, composed of A, B and C subunits.

It is found in the mitochondrion. The enzyme catalyses L-glutamyl-tRNA(Gln) + L-glutamine + ATP + H2O = L-glutaminyl-tRNA(Gln) + L-glutamate + ADP + phosphate + H(+). Functionally, allows the formation of correctly charged Gln-tRNA(Gln) through the transamidation of misacylated Glu-tRNA(Gln) in the mitochondria. The reaction takes place in the presence of glutamine and ATP through an activated gamma-phospho-Glu-tRNA(Gln). This chain is Glutamyl-tRNA(Gln) amidotransferase subunit A, mitochondrial, found in Fusarium vanettenii (strain ATCC MYA-4622 / CBS 123669 / FGSC 9596 / NRRL 45880 / 77-13-4) (Fusarium solani subsp. pisi).